The primary structure comprises 275 residues: MENINKIPVVINGAGGKMGREVVKAVAGAADMEIIAAVDKNPALLGQDAGEIAGCGAVEVPIVNDLEASLVMATQSKIQGVMVDFTHPSGVYANTRAAIAYGVRPVVGTTGLSEEQINDLKEFAEKASTGALIIPNFSIGVVLLQQASLQAAKYFDHVEIIELHHNQKADAPSGTAIKTAQMLAELGKQFNPAEVEEKEEMPGAKGAVTEDNIRIHSVRLPGLIAHQEMIFGAPGQIYTLRHDTSDRSCYMPGVLLSIRKVTELNTLVYGLENIL.

NAD(+) contacts are provided by residues 13–18 (GAGGKM) and 108–110 (GTT). Catalysis depends on His-164, which acts as the Proton donor/acceptor. (S)-2,3,4,5-tetrahydrodipicolinate is bound at residue His-165. Catalysis depends on Lys-168, which acts as the Proton donor. Residue 174 to 175 (GT) participates in (S)-2,3,4,5-tetrahydrodipicolinate binding.

The protein belongs to the DapB family.

It localises to the cytoplasm. It catalyses the reaction (S)-2,3,4,5-tetrahydrodipicolinate + NAD(+) + H2O = (2S,4S)-4-hydroxy-2,3,4,5-tetrahydrodipicolinate + NADH + H(+). The enzyme catalyses (S)-2,3,4,5-tetrahydrodipicolinate + NADP(+) + H2O = (2S,4S)-4-hydroxy-2,3,4,5-tetrahydrodipicolinate + NADPH + H(+). The protein operates within amino-acid biosynthesis; L-lysine biosynthesis via DAP pathway; (S)-tetrahydrodipicolinate from L-aspartate: step 4/4. In terms of biological role, catalyzes the conversion of 4-hydroxy-tetrahydrodipicolinate (HTPA) to tetrahydrodipicolinate. The chain is 4-hydroxy-tetrahydrodipicolinate reductase from Picosynechococcus sp. (strain ATCC 27264 / PCC 7002 / PR-6) (Agmenellum quadruplicatum).